The chain runs to 118 residues: Beta-2-microglobulin (118 aa).

The signal sequence occupies residues 1-21 (MGSRWGIAVLGLFCFVSCLEA). Residues 26–113 (PKIQVYSRHP…VHEGVKKTVK (88 aa)) enclose the Ig-like C1-type domain. A disulfide bridge connects residues cysteine 46 and cysteine 101.

This sequence belongs to the beta-2-microglobulin family. As to quaternary structure, heterodimer of an alpha chain and a beta chain. Beta-2-microglobulin is the beta-chain of major histocompatibility complex class I molecules.

It is found in the secreted. Component of the class I major histocompatibility complex (MHC). Involved in the presentation of peptide antigens to the immune system. The sequence is that of Beta-2-microglobulin (B2M) from Ornithorhynchus anatinus (Duckbill platypus).